The primary structure comprises 327 residues: Malate dehydrogenase (327 aa).

Gly-11 to Gly-17 contacts NAD(+). 2 residues coordinate substrate: Arg-92 and Arg-98. NAD(+)-binding positions include Asn-105, Gln-112, and Val-129–Asn-131. Substrate contacts are provided by Asn-131 and Arg-162. The active-site Proton acceptor is the His-187.

This sequence belongs to the LDH/MDH superfamily. MDH type 2 family.

The enzyme catalyses (S)-malate + NAD(+) = oxaloacetate + NADH + H(+). Functionally, catalyzes the reversible oxidation of malate to oxaloacetate. This is Malate dehydrogenase from Leptospira biflexa serovar Patoc (strain Patoc 1 / Ames).